A 316-amino-acid chain; its full sequence is MYGEILSFFYITFFILVLPTQIFGIFVILRFSTKHLKLWKKFLLCNLICQIISVATLCLLQLRQVSNLSPMEIWCYGPIRHFSAITSYLFYVLSQISTLMTYFLVFITIYLKYEAVKNVNKQNYRKVVIILMLLLPIFITMVAQIDLMIVFFSPNEAQKKFNELNAIITDHSVIGYVISGRISSFLLTVIIFGSVFLLPPAGFFIRKKIIRCINSTSDSASVGQKFQRRSFINGLTLQSFLPLVCICPIFACYFVVSRTKTDLPFEQHILPVLVMLPTLFDPYIILYSVTPYRKQIRTWLGMTKTVPMVIVASVMI.

7 helical membrane-spanning segments follow: residues 8 to 28 (FFYI…IFVI), 42 to 62 (FLLC…LLQL), 89 to 109 (LFYV…FITI), 127 to 147 (VVII…QIDL), 185 to 205 (FLLT…GFFI), 236 to 256 (TLQS…YFVV), and 269 to 289 (ILPV…LYSV).

The protein belongs to the nematode receptor-like protein srd family.

It is found in the membrane. This is Serpentine receptor class delta-48 (srd-48) from Caenorhabditis elegans.